We begin with the raw amino-acid sequence, 492 residues long: Phosphatidylinositol 4-kinase type 2-beta (492 aa).

Over residues 1-11 (MEPKQTADARD) the composition is skewed to basic and acidic residues. A disordered region spans residues 1–98 (MEPKQTADAR…SDRENMSGGH (98 aa)). Residues 127–462 (GVFPERISQG…VQMPRVVVER (336 aa)) form the PI3K/PI4K catalytic domain. The G-loop stretch occupies residues 133-139 (ISQGSSG). Residues Ser-140 and Lys-155 each contribute to the ATP site. The tract at residues 160 to 162 (EPY) is important for substrate binding. The important for interaction with membranes stretch occupies residues 168 to 181 (KWTKYFHKICCPCC). Residues 264–267 (QLFV) and 278–279 (RK) contribute to the ATP site. The important for interaction with membranes stretch occupies residues 271 to 279 (KEADYWLRK). A catalytic loop region spans residues 308–316 (RNTDRGNDN). Residues 353-373 (AIDNGLAFPFKHPDEWRAYPF) form an activation loop region. Asp-355 serves as a coordination point for ATP. Residues 368–377 (WRAYPFHWAW) are important for interaction with membranes.

Belongs to the PI3/PI4-kinase family. Type II PI4K subfamily.

The protein localises to the cytoplasm. Its subcellular location is the cytosol. It localises to the golgi apparatus membrane. The protein resides in the endoplasmic reticulum membrane. It is found in the cell membrane. The protein localises to the early endosome membrane. It catalyses the reaction a 1,2-diacyl-sn-glycero-3-phospho-(1D-myo-inositol) + ATP = a 1,2-diacyl-sn-glycero-3-phospho-(1D-myo-inositol 4-phosphate) + ADP + H(+). In terms of biological role, contributes to the overall PI4-kinase activity of the cell. This contribution may be especially significant in plasma membrane, endosomal and Golgi compartments. The phosphorylation of phosphatidylinositol (PI) to PI4P is the first committed step in the generation of phosphatidylinositol 4,5-bisphosphate (PIP2), a precursor of the second messenger inositol 1,4,5-trisphosphate (InsP3). In Xenopus tropicalis (Western clawed frog), this protein is Phosphatidylinositol 4-kinase type 2-beta (pi4k2b).